A 206-amino-acid polypeptide reads, in one-letter code: Large ribosomal subunit protein bL25 (206 aa).

It belongs to the bacterial ribosomal protein bL25 family. CTC subfamily. In terms of assembly, part of the 50S ribosomal subunit; part of the 5S rRNA/L5/L18/L25 subcomplex. Contacts the 5S rRNA. Binds to the 5S rRNA independently of L5 and L18.

Functionally, this is one of the proteins that binds to the 5S RNA in the ribosome where it forms part of the central protuberance. The chain is Large ribosomal subunit protein bL25 from Bartonella henselae (strain ATCC 49882 / DSM 28221 / CCUG 30454 / Houston 1) (Rochalimaea henselae).